The chain runs to 465 residues: Ribulose bisphosphate carboxylase large chain (465 aa).

An N6,N6,N6-trimethyllysine modification is found at Lys-4. 2 residues coordinate substrate: Xaa-113 and Thr-163. Catalysis depends on Lys-165, which acts as the Proton acceptor. Residue Lys-167 coordinates substrate. The Mg(2+) site is built by Lys-191, Asp-193, and Glu-194. N6-carboxylysine is present on Lys-191. His-284 (proton acceptor) is an active-site residue. Arg-285, His-317, and Ser-369 together coordinate substrate.

This sequence belongs to the RuBisCO large chain family. Type I subfamily. Heterohexadecamer of 8 large chains and 8 small chains; disulfide-linked. The disulfide link is formed within the large subunit homodimers. The cofactor is Mg(2+). Post-translationally, the disulfide bond which can form in the large chain dimeric partners within the hexadecamer appears to be associated with oxidative stress and protein turnover.

It localises to the plastid. The protein resides in the chloroplast. The enzyme catalyses 2 (2R)-3-phosphoglycerate + 2 H(+) = D-ribulose 1,5-bisphosphate + CO2 + H2O. It carries out the reaction D-ribulose 1,5-bisphosphate + O2 = 2-phosphoglycolate + (2R)-3-phosphoglycerate + 2 H(+). In terms of biological role, ruBisCO catalyzes two reactions: the carboxylation of D-ribulose 1,5-bisphosphate, the primary event in carbon dioxide fixation, as well as the oxidative fragmentation of the pentose substrate in the photorespiration process. Both reactions occur simultaneously and in competition at the same active site. The protein is Ribulose bisphosphate carboxylase large chain of Cornus obliqua (Silky dogwood).